The following is a 352-amino-acid chain: Diacylglycerol acyltransferase/mycolyltransferase Ag85C (352 aa).

The N-terminal stretch at 1-37 is a signal peptide; it reads MSFIEKVRKLRGAAATMPRRLAIAAVGASLLSGVAVA. 86–87 is a substrate binding site; sequence LR. Residues 102-112 form a fibronectin-binding region; that stretch reads FEEFYQSGLSV. The substrate site is built by Ser170 and Asn198. Ser170 (nucleophile) is an active-site residue. Glu274 is an active-site residue. Substrate contacts are provided by residues 276–279 and 306–308; these read LTLR and HSW. The active site involves His306. Positions 332-352 are disordered; sequence TAAPAQPAQPAQPAQPAQPAT. Over residues 333–352 the composition is skewed to low complexity; sequence AAPAQPAQPAQPAQPAQPAT.

It belongs to the mycobacterial A85 antigen family. As to quaternary structure, homodimer.

The protein localises to the secreted. The enzyme catalyses an acyl-CoA + a 1,2-diacyl-sn-glycerol = a triacyl-sn-glycerol + CoA. It catalyses the reaction 2 alpha,alpha'-trehalose 6-mycolate = alpha,alpha'-trehalose 6,6'-bismycolate + alpha,alpha-trehalose. The antigen 85 proteins (FbpA, FbpB, FbpC) are responsible for the high affinity of mycobacteria to fibronectin, a large adhesive glycoprotein, which facilitates the attachment of M.tuberculosis to murine alveolar macrophages (AMs). They also help to maintain the integrity of the cell wall by catalyzing the transfer of mycolic acids to cell wall arabinogalactan and through the synthesis of alpha,alpha-trehalose dimycolate (TDM, cord factor). They catalyze the transfer of a mycoloyl residue from one molecule of alpha,alpha-trehalose monomycolate (TMM) to another TMM, leading to the formation of TDM. This is Diacylglycerol acyltransferase/mycolyltransferase Ag85C (fbpC) from Mycobacterium avium.